The primary structure comprises 88 residues: Small ribosomal subunit protein uS17 (88 aa).

It belongs to the universal ribosomal protein uS17 family. In terms of assembly, part of the 30S ribosomal subunit.

Functionally, one of the primary rRNA binding proteins, it binds specifically to the 5'-end of 16S ribosomal RNA. The polypeptide is Small ribosomal subunit protein uS17 (Teredinibacter turnerae (strain ATCC 39867 / T7901)).